Here is a 430-residue protein sequence, read N- to C-terminus: Probable aspartic-type endopeptidase TRV_06366 (430 aa).

Positions 1-17 (MHVSTLLVAVLLPLALS) are cleaved as a signal peptide. The propeptide at 18–87 (KPTPRKKTSS…SKATAGSGKE (70 aa)) is activation peptide. The disordered stretch occupies residues 61 to 104 (HEMEGYHPQPISKLPGNSKATAGSGKEGVESQDEKGEVVNNPTD). The segment covering 87–104 (EGVESQDEKGEVVNNPTD) has biased composition (basic and acidic residues). Residues 109 to 427 (FLSPVTIGGQ…DQRGPSISLA (319 aa)) form the Peptidase A1 domain. D125 is a catalytic residue. Residue N306 is glycosylated (N-linked (GlcNAc...) asparagine). D314 is an active-site residue.

Belongs to the peptidase A1 family.

Its subcellular location is the secreted. Its function is as follows. Probable secreted aspartic-type endopeptidase which contributes to virulence. The sequence is that of Probable aspartic-type endopeptidase TRV_06366 from Trichophyton verrucosum (strain HKI 0517).